Consider the following 530-residue polypeptide: MLDFLAANPLIALAVILAVGLAIGRISLFGVSLGAAAVLIVALVVSTLNPDIQIPAFVFQLGLAMFVYVIGISAGPAFFREFRSRGWKLTLFMITLLVSLTALAWVLIRAFGLGAGAGAGMFAGSLTSTPGMAAVVALMDPAQAGDPVIGYSLAYPGAVLGSILVAAVGAKLLKVNHTEDAREEGLVTEPLVWKGVRIGEGISGTIGDLPRLSGQQIIATRIVEDPHEHRLADPTLPIKPGMELVINGTVNAVDRAIAALGGECDTKIEDTELVYSRFTVSNPDIVGRTVAELDPVANGFMIARIRQGDTEIVPHRDTVLNYSDRVRVVAAPGRMGEVRRFLGDSEKALGDVNLLPFAIGLSLGLLLGAIPVPLPGDTTMYLGFGGGPIVAGLILGALNRTGPITWQLPFHANRTISTLGLALFLAGVGTSAGAGFRQALTDPQSFVYMGVGFAITVTSALVCAVVGMWLLKLKWDESMGVAAGATTNPAIISYLNDQTGTDLANRGYATVYPTAMIGKILACQVLFLLL.

Transmembrane regions (helical) follow at residues Phe4–Ile23, Leu28–Thr47, Phe57–Phe79, Leu91–Leu113, and Val148–Ala170. The region spanning Leu260–Asp344 is the RCK C-terminal domain. 4 helical membrane passes run Val352 to Leu374, Thr379 to Leu398, Leu419 to Thr441, and Val451 to Leu473.

The protein belongs to the AAE transporter (TC 2.A.81) family.

The protein resides in the cell membrane. This is an uncharacterized protein from Corynebacterium efficiens (strain DSM 44549 / YS-314 / AJ 12310 / JCM 11189 / NBRC 100395).